The chain runs to 352 residues: Thymidine kinase (352 aa).

26–33 serves as a coordination point for ATP; sequence GSMGIGKT. The Proton acceptor role is filled by glutamate 54. Glutamine 95 serves as a coordination point for substrate. Arginine 185 lines the ATP pocket. Position 191 (arginine 191) interacts with substrate.

The protein belongs to the herpesviridae thymidine kinase family. Homodimer.

The enzyme catalyses thymidine + ATP = dTMP + ADP + H(+). Catalyzes the transfer of the gamma-phospho group of ATP to thymidine to generate dTMP in the salvage pathway of pyrimidine synthesis. The dTMP serves as a substrate for DNA polymerase during viral DNA replication. Allows the virus to be reactivated and to grow in non-proliferative cells lacking a high concentration of phosphorylated nucleic acid precursors. This Gallid herpesvirus 2 (strain Chicken/Md5/ATCC VR-987) (GaHV-2) protein is Thymidine kinase.